Consider the following 294-residue polypeptide: Nucleotide-binding protein CLB_3433 (294 aa).

8–15 contributes to the ATP binding site; the sequence is GLSGAGKT. 59–62 serves as a coordination point for GTP; that stretch reads DIRG.

It belongs to the RapZ-like family.

Its function is as follows. Displays ATPase and GTPase activities. The polypeptide is Nucleotide-binding protein CLB_3433 (Clostridium botulinum (strain ATCC 19397 / Type A)).